Reading from the N-terminus, the 127-residue chain is Anti-adapter protein IraD (127 aa).

The protein belongs to the GpW/Gp25 family. IraD subfamily. Interacts with RssB.

It is found in the cytoplasm. Inhibits RpoS proteolysis by regulating RssB activity, thereby increasing the stability of the sigma stress factor RpoS during oxidative stress. Its effect on RpoS stability is due to its interaction with RssB, which probably blocks the interaction of RssB with RpoS, and the consequent delivery of the RssB-RpoS complex to the ClpXP protein degradation pathway. In Escherichia coli (strain SMS-3-5 / SECEC), this protein is Anti-adapter protein IraD.